A 585-amino-acid polypeptide reads, in one-letter code: Arginine--tRNA ligase (585 aa).

Positions 131 to 141 (ANPTGPMHVGH) match the 'HIGH' region motif.

It belongs to the class-I aminoacyl-tRNA synthetase family. Monomer.

It is found in the cytoplasm. The enzyme catalyses tRNA(Arg) + L-arginine + ATP = L-arginyl-tRNA(Arg) + AMP + diphosphate. The polypeptide is Arginine--tRNA ligase (Bartonella quintana (strain Toulouse) (Rochalimaea quintana)).